A 549-amino-acid polypeptide reads, in one-letter code: Probable protein kinase UbiB (549 aa).

The 379-residue stretch at 123–501 (DFEDTPLASA…QQKAHKSNYL (379 aa)) folds into the Protein kinase domain. ATP is bound by residues 129–137 (LASASISQV) and lysine 152. The active-site Proton acceptor is the aspartate 287. The next 2 membrane-spanning stretches (helical) occupy residues 498–518 (SNYL…LLNQ) and 520–540 (ATLW…VLGW).

It belongs to the ABC1 family. UbiB subfamily.

It is found in the cell inner membrane. The protein operates within cofactor biosynthesis; ubiquinone biosynthesis [regulation]. Its function is as follows. Is probably a protein kinase regulator of UbiI activity which is involved in aerobic coenzyme Q (ubiquinone) biosynthesis. This is Probable protein kinase UbiB from Shewanella piezotolerans (strain WP3 / JCM 13877).